A 327-amino-acid chain; its full sequence is ATP-dependent 6-phosphofructokinase (327 aa).

An ATP-binding site is contributed by G12. ADP contacts are provided by residues 22–26 (RGVVR) and 55–60 (RYSVSD). ATP is bound by residues 73–74 (RF) and 103–106 (GDGS). A Mg(2+)-binding site is contributed by D104. 127-129 (TID) contacts substrate. D129 (proton acceptor) is an active-site residue. R156 serves as a coordination point for ADP. Residues R164 and 171 to 173 (MGR) contribute to the substrate site. Residues 187 to 189 (GCE), K213, and 215 to 217 (KKH) contribute to the ADP site. Substrate contacts are provided by residues E224, R245, and 251 to 254 (HIQR).

Belongs to the phosphofructokinase type A (PFKA) family. ATP-dependent PFK group I subfamily. Prokaryotic clade 'B1' sub-subfamily. In terms of assembly, homotetramer. Mg(2+) is required as a cofactor.

It is found in the cytoplasm. It catalyses the reaction beta-D-fructose 6-phosphate + ATP = beta-D-fructose 1,6-bisphosphate + ADP + H(+). The protein operates within carbohydrate degradation; glycolysis; D-glyceraldehyde 3-phosphate and glycerone phosphate from D-glucose: step 3/4. With respect to regulation, allosterically activated by ADP and other diphosphonucleosides, and allosterically inhibited by phosphoenolpyruvate. Functionally, catalyzes the phosphorylation of D-fructose 6-phosphate to fructose 1,6-bisphosphate by ATP, the first committing step of glycolysis. The polypeptide is ATP-dependent 6-phosphofructokinase (Yersinia pseudotuberculosis serotype O:1b (strain IP 31758)).